Reading from the N-terminus, the 251-residue chain is Ubiquinone/menaquinone biosynthesis C-methyltransferase UbiE (251 aa).

S-adenosyl-L-methionine-binding positions include threonine 74, aspartate 95, 123–124, and serine 140; that span reads NA.

This sequence belongs to the class I-like SAM-binding methyltransferase superfamily. MenG/UbiE family.

It catalyses the reaction a 2-demethylmenaquinol + S-adenosyl-L-methionine = a menaquinol + S-adenosyl-L-homocysteine + H(+). It carries out the reaction a 2-methoxy-6-(all-trans-polyprenyl)benzene-1,4-diol + S-adenosyl-L-methionine = a 5-methoxy-2-methyl-3-(all-trans-polyprenyl)benzene-1,4-diol + S-adenosyl-L-homocysteine + H(+). It functions in the pathway quinol/quinone metabolism; menaquinone biosynthesis; menaquinol from 1,4-dihydroxy-2-naphthoate: step 2/2. The protein operates within cofactor biosynthesis; ubiquinone biosynthesis. Functionally, methyltransferase required for the conversion of demethylmenaquinol (DMKH2) to menaquinol (MKH2) and the conversion of 2-polyprenyl-6-methoxy-1,4-benzoquinol (DDMQH2) to 2-polyprenyl-3-methyl-6-methoxy-1,4-benzoquinol (DMQH2). The polypeptide is Ubiquinone/menaquinone biosynthesis C-methyltransferase UbiE (Yersinia enterocolitica serotype O:8 / biotype 1B (strain NCTC 13174 / 8081)).